A 215-amino-acid polypeptide reads, in one-letter code: MSKAIVLDSHLKEKGSVELPKRYEGINSHNLYLYVKHYLSSARANTAKSKNRAEVSGGGRKPWAQKGGGRARAGSITSPVFVGGGVSHGATNKRNYNLKINKKQKRLALEYALEEKAQANKLFVVEKIAIKGVVEDNKRKHLTKEANQMFQALEQRDTLFVCLNMDEYTELAFSNLKKCLVIDVSELNAYLLAAFSSVVMEEAAFQHVVQDKTEE.

The tract at residues 46-72 (TAKSKNRAEVSGGGRKPWAQKGGGRAR) is disordered. Gly residues predominate over residues 56–71 (SGGGRKPWAQKGGGRA).

It belongs to the universal ribosomal protein uL4 family. Part of the 50S ribosomal subunit.

One of the primary rRNA binding proteins, this protein initially binds near the 5'-end of the 23S rRNA. It is important during the early stages of 50S assembly. It makes multiple contacts with different domains of the 23S rRNA in the assembled 50S subunit and ribosome. Its function is as follows. Forms part of the polypeptide exit tunnel. In Helicobacter pylori (strain J99 / ATCC 700824) (Campylobacter pylori J99), this protein is Large ribosomal subunit protein uL4.